Here is a 256-residue protein sequence, read N- to C-terminus: MRVIVADCSAEYSGRLNASLPLAKRVLLIKADSSLLIFSELGSYKPLNWMTAPCTIREIDPAAKSAQHSRESVAGGAVDGDSATHSPESVAAGEPEKVLRVSADKGSDILEVTLQHIYSDQTYDLGEDPGLIKDGVEDHLQRYLAEQIERIGKGAKLVRREYPTAIGPVDIMAVNAEGEHVAVEIKRHGGIDGVEQLTRYCELLNRDPLLAPVHGIFAAQTITPQAQVLAKDRGFTCLILDYDDMKGTEDDSLRLF.

The segment at 62–97 (AAKSAQHSRESVAGGAVDGDSATHSPESVAAGEPEK) is disordered.

This sequence belongs to the NucS endonuclease family.

Its subcellular location is the cytoplasm. Its function is as follows. Cleaves both 3' and 5' ssDNA extremities of branched DNA structures. The sequence is that of Endonuclease NucS from Bifidobacterium longum (strain NCC 2705).